Consider the following 546-residue polypeptide: CTP synthase (546 aa).

An amidoligase domain region spans residues 1–269; that stretch reads MNSNTKIIFV…DAKLVELLNL (269 aa). A CTP-binding site is contributed by Ser-16. Residue Ser-16 participates in UTP binding. ATP is bound by residues 17–22 and Asp-74; that span reads SLGKGV. Mg(2+) is bound by residues Asp-74 and Glu-143. CTP-binding positions include 150–152, 190–195, and Lys-226; these read DIE and KTKPTQ. UTP is bound by residues 190–195 and Lys-226; that span reads KTKPTQ. In terms of domain architecture, Glutamine amidotransferase type-1 spans 294–546; the sequence is TIAMVGKYVS…IQAAIENSNN (253 aa). Residue Gly-356 participates in L-glutamine binding. Cys-383 serves as the catalytic Nucleophile; for glutamine hydrolysis. L-glutamine contacts are provided by residues 384–387, Glu-407, and Arg-474; that span reads LGMQ. Catalysis depends on residues His-519 and Glu-521.

Belongs to the CTP synthase family. As to quaternary structure, homotetramer.

The catalysed reaction is UTP + L-glutamine + ATP + H2O = CTP + L-glutamate + ADP + phosphate + 2 H(+). It carries out the reaction L-glutamine + H2O = L-glutamate + NH4(+). The enzyme catalyses UTP + NH4(+) + ATP = CTP + ADP + phosphate + 2 H(+). Its pathway is pyrimidine metabolism; CTP biosynthesis via de novo pathway; CTP from UDP: step 2/2. With respect to regulation, allosterically activated by GTP, when glutamine is the substrate; GTP has no effect on the reaction when ammonia is the substrate. The allosteric effector GTP functions by stabilizing the protein conformation that binds the tetrahedral intermediate(s) formed during glutamine hydrolysis. Inhibited by the product CTP, via allosteric rather than competitive inhibition. In terms of biological role, catalyzes the ATP-dependent amination of UTP to CTP with either L-glutamine or ammonia as the source of nitrogen. Regulates intracellular CTP levels through interactions with the four ribonucleotide triphosphates. The sequence is that of CTP synthase from Francisella tularensis subsp. tularensis (strain FSC 198).